Here is a 389-residue protein sequence, read N- to C-terminus: Leucine aminopeptidase 1 (389 aa).

The first 19 residues, 1 to 19 (MKLPALLTLGVAASTMVLA), serve as a signal peptide directing secretion. Residues 20–88 (AIAPDQVPLN…LPKVFPTPAV (69 aa)) constitute a propeptide that is removed on maturation. N-linked (GlcNAc...) asparagine glycans are attached at residues asparagine 96, asparagine 119, asparagine 149, asparagine 164, and asparagine 181. Zn(2+)-binding residues include histidine 189 and aspartate 208. An N-linked (GlcNAc...) asparagine glycan is attached at asparagine 233. Zn(2+) is bound by residues glutamate 247 and aspartate 274. Cysteine 323 and cysteine 327 are joined by a disulfide. Histidine 356 contributes to the Zn(2+) binding site.

Belongs to the peptidase M28 family. M28E subfamily. Monomer. It depends on Zn(2+) as a cofactor.

The protein resides in the secreted. Its function is as follows. Extracellular aminopeptidase that allows assimilation of proteinaceous substrates. The chain is Leucine aminopeptidase 1 (LAP1) from Paracoccidioides brasiliensis (strain Pb18).